The sequence spans 421 residues: Diaminobutyrate--2-oxoglutarate transaminase (421 aa).

Position 267 is an N6-(pyridoxal phosphate)lysine (K267).

This sequence belongs to the class-III pyridoxal-phosphate-dependent aminotransferase family. In terms of assembly, homohexamer. It depends on pyridoxal 5'-phosphate as a cofactor.

It catalyses the reaction L-2,4-diaminobutanoate + 2-oxoglutarate = L-aspartate 4-semialdehyde + L-glutamate. Its pathway is amine and polyamine biosynthesis; ectoine biosynthesis; L-ectoine from L-aspartate 4-semialdehyde: step 1/3. Functionally, catalyzes reversively the conversion of L-aspartate beta-semialdehyde (ASA) to L-2,4-diaminobutyrate (DABA) by transamination with L-glutamate. Seems to use L-glutamate specifically as the amino group donor to ASA, as it is not active with L-alanine, L-glutamine, L-aspartate and L-lysine, and is only poorly active with L-homoserine. In the reverse reaction, gamma-aminobutyric acid (GABA) and L-ornithine can also be used as amino group donors to 2-oxoglutarate, but with a reduced activity compared to that with DABA. In Halomonas elongata (strain ATCC 33173 / DSM 2581 / NBRC 15536 / NCIMB 2198 / 1H9), this protein is Diaminobutyrate--2-oxoglutarate transaminase (ectB).